We begin with the raw amino-acid sequence, 394 residues long: Guanine nucleotide-binding protein G(s) subunit alpha (394 aa).

The segment at 1–25 (MGCLGDSKTEDQRNEEKAQREANKK) is disordered. Gly2 is lipidated: N-palmitoyl glycine. Cys3 carries S-palmitoyl cysteine lipidation. A compositionally biased stretch (basic and acidic residues) spans 7–25 (SKTEDQRNEEKAQREANKK). The G-alpha domain occupies 39–394 (ATHRLLLLGA…RMHLRQYELL (356 aa)). Positions 42 to 55 (RLLLLGAGESGKST) are G1 motif. 47 to 55 (GAGESGKST) contacts GTP. Mg(2+) is bound at residue Ser54. Positions 68 to 90 (FNGEGGEEDPQAARSNSDGEKAT) are disordered. The segment at 196-204 (DLLRCRVLT) is G2 motif. Residues 197–204 (LLRCRVLT), 223–227 (DVGGQ), 292–295 (NKQD), and Ala366 contribute to the GTP site. Mg(2+) is bound at residue Thr204. The G3 motif stretch occupies residues 219–228 (FHMFDVGGQR). Residues 288-295 (ILFLNKQD) are G4 motif. Residues 364–369 (TCAVDT) are G5 motif.

It belongs to the G-alpha family. G(s) subfamily. Heterotrimeric G proteins are composed of 3 units; alpha, beta and gamma. The alpha chain contains the guanine nucleotide binding site. Interacts with CRY1; the interaction may block GPCR-mediated regulation of cAMP concentrations. Interacts with ADCY6 and stimulates its adenylyl cyclase activity. Interacts with ADCY2 and ADCY5. Stimulates the ADCY5 adenylyl cyclase activity. Interaction with SASH1.

The protein resides in the cell membrane. In terms of biological role, guanine nucleotide-binding proteins (G proteins) function as transducers in numerous signaling pathways controlled by G protein-coupled receptors (GPCRs). Signaling involves the activation of adenylyl cyclases, resulting in increased levels of the signaling molecule cAMP. GNAS functions downstream of several GPCRs, including beta-adrenergic receptors. Stimulates the Ras signaling pathway via RAPGEF2. The sequence is that of Guanine nucleotide-binding protein G(s) subunit alpha (GNAS) from Cricetulus longicaudatus (Long-tailed dwarf hamster).